The sequence spans 365 residues: Flagellar P-ring protein (365 aa).

Residues 1–19 (MIKFLSALILLLVTTAAQA) form the signal peptide.

Belongs to the FlgI family. The basal body constitutes a major portion of the flagellar organelle and consists of four rings (L,P,S, and M) mounted on a central rod.

It localises to the periplasm. It is found in the bacterial flagellum basal body. Assembles around the rod to form the L-ring and probably protects the motor/basal body from shearing forces during rotation. This Shigella boydii serotype 4 (strain Sb227) protein is Flagellar P-ring protein.